Here is an 88-residue protein sequence, read N- to C-terminus: MAEAQKTVRTLTGRVVSDKMDKTITVLIERRVKHPIYGKYVKRSTKLHAHDETNQCKIGDKVSIRETRPQSKTKSWALVEVVERAVEV.

This sequence belongs to the universal ribosomal protein uS17 family. As to quaternary structure, part of the 30S ribosomal subunit.

One of the primary rRNA binding proteins, it binds specifically to the 5'-end of 16S ribosomal RNA. This chain is Small ribosomal subunit protein uS17, found in Stutzerimonas stutzeri (strain A1501) (Pseudomonas stutzeri).